The chain runs to 1134 residues: Error-prone DNA polymerase (1134 aa).

The tract at residues Met1–Gln33 is disordered.

Belongs to the DNA polymerase type-C family. DnaE2 subfamily.

The protein resides in the cytoplasm. The catalysed reaction is DNA(n) + a 2'-deoxyribonucleoside 5'-triphosphate = DNA(n+1) + diphosphate. Its function is as follows. DNA polymerase involved in damage-induced mutagenesis and translesion synthesis (TLS). It is not the major replicative DNA polymerase. This chain is Error-prone DNA polymerase, found in Cutibacterium acnes (strain DSM 16379 / KPA171202) (Propionibacterium acnes).